Here is a 281-residue protein sequence, read N- to C-terminus: Bifunctional protein FolD (281 aa).

NADP(+) contacts are provided by residues glycine 165–glycine 167, threonine 192, and valine 233.

This sequence belongs to the tetrahydrofolate dehydrogenase/cyclohydrolase family. In terms of assembly, homodimer.

It catalyses the reaction (6R)-5,10-methylene-5,6,7,8-tetrahydrofolate + NADP(+) = (6R)-5,10-methenyltetrahydrofolate + NADPH. The catalysed reaction is (6R)-5,10-methenyltetrahydrofolate + H2O = (6R)-10-formyltetrahydrofolate + H(+). It functions in the pathway one-carbon metabolism; tetrahydrofolate interconversion. Catalyzes the oxidation of 5,10-methylenetetrahydrofolate to 5,10-methenyltetrahydrofolate and then the hydrolysis of 5,10-methenyltetrahydrofolate to 10-formyltetrahydrofolate. This chain is Bifunctional protein FolD, found in Mycobacterium marinum (strain ATCC BAA-535 / M).